The following is a 621-amino-acid chain: MEATGAEATLSQVTAVDGEDNLFQDKESRATAKERGEAAVFGLENIVTANGATSAADLAPPKDVVDEWPEPKQTHTFFFVRICSYEDPSLKAKLEQADKECQKKIQARSHIFEALRTKRSERSNIISELKPLAAENKQYNEVVSGKLKEIEPLQKSLGKFRSENNAMRAQGAGLCSSIEELDQLIKSLNDRISHESISLDEEKRLVKEIKQLNGTRSKVIENAAKRAKMQDTVVERGTIHDQVKQIGVGIDEVKRDRQAVRDKIKVLEDQIHAVDGEIAALQDDLTAATARKDKAFEALNELRKTRDLNNTSFHQYRTISNSVRDLSARGEVEAVQQLCQNEVEKFMAQWCSSKSFREDYEKRILVSLNSRQLSRDGRMRNPDEKPIVLETQVAPPAEQEPAPLKKPAKQAKEAPAPRADVTPKDEIRAKAPAKAAKAKQPLDIDDIPDVHDDEPPKEKTKPKVDEAKLKEMKRQEEIEKNKLALERKKKQAEKQAMKAAARAEKEAEKKLKEKEKKARKRSATAGGAESEEAAESDAKSDEAEAQEEEPAAPVTIKKNARHRSTVTKTKTPLPKAVLKRKKSQAFWSWGAPMAALAAALVALLGALVYYQYYYLPASTSN.

Positions 250 to 305 (IDEVKRDRQAVRDKIKVLEDQIHAVDGEIAALQDDLTAATARKDKAFEALNELRKT) form a coiled coil. Basic and acidic residues predominate over residues 374–387 (SRDGRMRNPDEKPI). The tract at residues 374–572 (SRDGRMRNPD…RSTVTKTKTP (199 aa)) is disordered. The segment covering 430–441 (KAPAKAAKAKQP) has biased composition (low complexity). Over residues 448 to 516 (PDVHDDEPPK…AEKKLKEKEK (69 aa)) the composition is skewed to basic and acidic residues. Positions 466 to 524 (EAKLKEMKRQEEIEKNKLALERKKKQAEKQAMKAAARAEKEAEKKLKEKEKKARKRSAT) form a coiled coil. The helical transmembrane segment at 589 to 609 (WGAPMAALAAALVALLGALVY) threads the bilayer.

It belongs to the plant proton pump-interactor protein family. In terms of assembly, interacts with BRI1.

It localises to the cell membrane. May regulate plasma membrane ATPase activity. The polypeptide is Proton pump-interactor BIP131 (Oryza sativa subsp. japonica (Rice)).